The primary structure comprises 452 residues: Keratin, type II cytoskeletal 80 (452 aa).

The head stretch occupies residues 1–82 (MAYRSCVVGF…DPAVQQQKNQ (82 aa)). Residue serine 45 is modified to Phosphoserine. Positions 82–118 (QEKEEMKALNDKFASLIGKVQALEQRNQLLETRWSFL) are coil 1A. The IF rod domain maps to 83–394 (EKEEMKALND…KLMEGEESRM (312 aa)). The tract at residues 119-135 (QGQGSATFDLSHHYETF) is linker 1. Residues 136–227 (QGRLQEELRK…TVYEQELKDL (92 aa)) form a coil 1B region. Residues 228 to 251 (TAQVKDVSVTVGLDSRCHIDLSGI) are linker 12. Positions 252 to 390 (VEEVKAQYDA…ATYHKLMEGE (139 aa)) are coil 2. Residues 391–452 (ESRMDLPSAT…YLSQESEASE (62 aa)) form a tail region. Residues 412–452 (TASKSGLTKTSSRKKKNRRGPVIKITEMSEKYLSQESEASE) form a disordered region. Basic residues predominate over residues 422-432 (SSRKKKNRRGP). Polar residues predominate over residues 443–452 (YLSQESEASE).

It belongs to the intermediate filament family. In terms of assembly, heterotetramer of two type I and two type II keratins.

This Mus musculus (Mouse) protein is Keratin, type II cytoskeletal 80 (Krt80).